The primary structure comprises 504 residues: Anaerobic nitric oxide reductase transcription regulator NorR (504 aa).

A 4-aspartylphosphate modification is found at aspartate 57. The Sigma-54 factor interaction domain occupies methionine 187–valine 416. ATP-binding positions include glycine 215–glutamate 222 and alanine 278–glutamate 287. The segment at residues tryptophan 479–lysine 498 is a DNA-binding region (H-T-H motif).

Its pathway is nitrogen metabolism; nitric oxide reduction. Its function is as follows. Required for the expression of anaerobic nitric oxide (NO) reductase, acts as a transcriptional activator for at least the norVW operon. Activation also requires sigma-54. In Escherichia coli O6:K15:H31 (strain 536 / UPEC), this protein is Anaerobic nitric oxide reductase transcription regulator NorR.